The sequence spans 436 residues: Protein GOLM2 (436 aa).

Met-1 bears the N-acetylmethionine mark. Residues 1-14 (MVGFGANRRAGRLP) lie on the Cytoplasmic side of the membrane. The chain crosses the membrane as a helical; Signal-anchor for type II membrane protein span at residues 15–35 (SLVLVVLLVVIVVLAFNYWSI). The stretch at 35–195 (ISSRHVLLQE…QFLQEQKQEA (161 aa)) forms a coiled coil. The Lumenal portion of the chain corresponds to 36–436 (SSRHVLLQEE…YGKQHFNDVL (401 aa)). 2 stretches are compositionally biased toward basic and acidic residues: residues 193-207 (QEAH…KELD) and 224-247 (VADK…KRGG). The tract at residues 193-436 (QEAHKIQSND…YGKQHFNDVL (244 aa)) is disordered. Phosphoserine is present on residues Ser-233 and Ser-275. Composition is skewed to polar residues over residues 275–295 (SVSQ…QPLS) and 305–321 (NHNG…SSPL). 2 positions are modified to phosphoserine: Ser-328 and Ser-332. Over residues 344–362 (ATKDRVSDFHKLKQSRFFD) the composition is skewed to basic and acidic residues. Residue Ser-366 is modified to Phosphoserine. The segment covering 399–418 (YNEEEDGDGGEEDVQDDEER) has biased composition (acidic residues). Over residues 426 to 436 (DYGKQHFNDVL) the composition is skewed to basic and acidic residues.

The protein belongs to the GOLM family.

It localises to the membrane. The protein is Protein GOLM2 (GOLM2) of Pongo abelii (Sumatran orangutan).